Reading from the N-terminus, the 176-residue chain is Inorganic pyrophosphatase (176 aa).

Lysine 31, arginine 45, and tyrosine 57 together coordinate substrate. Mg(2+) contacts are provided by aspartate 67, aspartate 72, and aspartate 104. Tyrosine 141 provides a ligand contact to substrate.

Belongs to the PPase family. Homohexamer. Requires Mg(2+) as cofactor.

Its subcellular location is the cytoplasm. The enzyme catalyses diphosphate + H2O = 2 phosphate + H(+). Catalyzes the hydrolysis of inorganic pyrophosphate (PPi) forming two phosphate ions. The polypeptide is Inorganic pyrophosphatase (Methanopyrus kandleri (strain AV19 / DSM 6324 / JCM 9639 / NBRC 100938)).